The primary structure comprises 412 residues: Solute carrier family 22 member 18 (412 aa).

Helical transmembrane passes span 16 to 36, 51 to 71, 117 to 137, 148 to 168, 176 to 196, 232 to 252, 264 to 284, 294 to 314, 316 to 336, and 380 to 400; these read GIII…FMQF, VSFG…GPVF, LPAA…DLTA, LGLC…TLST, AFLA…CIPV, FLVK…FSII, AGYL…LVIG, ALLR…ALMS, VFHF…LNIV, and GVSI…LVLW.

The protein belongs to the major facilitator (TC 2.A.1) superfamily. Organic cation transporter (TC 2.A.1.19) family.

It localises to the apical cell membrane. May act as a transporter of organic cations based on a proton efflux antiport mechanism. May play a role in the transport of chloroquine and quinidine-related compounds in kidney. Plays a role in the regulation of lipid metabolism. The protein is Solute carrier family 22 member 18 (Slc67a1) of Rattus norvegicus (Rat).